We begin with the raw amino-acid sequence, 180 residues long: O-acetyl-ADP-ribose deacetylase (180 aa).

The Macro domain maps to 1–175 (MKPQIEVVVG…LYQRLLIQRG (175 aa)). Substrate is bound by residues 11–12 (DI), Asn-25, 33–35 (GVD), and 122–126 (STGVY). Catalysis depends on Asp-35, which acts as the Proton acceptor.

The protein belongs to the MacroD-type family. YmdB subfamily. Homodimer. Interacts with RNase III.

The catalysed reaction is 3''-O-acetyl-ADP-D-ribose + H2O = ADP-D-ribose + acetate + H(+). It carries out the reaction 2''-O-acetyl-ADP-D-ribose + H2O = ADP-D-ribose + acetate + H(+). Its function is as follows. Deacetylates O-acetyl-ADP ribose to yield ADP-ribose and free acetate. Down-regulates ribonuclease 3 (RNase III) activity. Acts by interacting directly with the region of the ribonuclease that is required for dimerization/activation. The sequence is that of O-acetyl-ADP-ribose deacetylase from Enterobacter sp. (strain 638).